The chain runs to 121 residues: MLTKKEQRLRRARQTRIRIAQQGVARLSVNRTNLHIYASVVSEDGTKVLASASTAEAEVRTQLGAIGKGGNVAAATLIGKRIAEKAKAAGVEKVAFDRAGFAYHGRVKALAEAAREAGLQF.

It belongs to the universal ribosomal protein uL18 family. Part of the 50S ribosomal subunit; part of the 5S rRNA/L5/L18/L25 subcomplex. Contacts the 5S and 23S rRNAs.

Functionally, this is one of the proteins that bind and probably mediate the attachment of the 5S RNA into the large ribosomal subunit, where it forms part of the central protuberance. In Delftia acidovorans (strain DSM 14801 / SPH-1), this protein is Large ribosomal subunit protein uL18.